Reading from the N-terminus, the 457-residue chain is MSFDLLKDINKKVHFIGIGGVSMSGLAAVLLNAGYKVSGSDSKESEITNRLKEEGAKIYIGHSKDNLQDVDVVVYTAAIPSDNPEIIKAKEDNLILMDRAEFLGQIMKGHKFNVAVAGTHGKTTTTSMISHVALSADLDPTILVGGDLDIIHGNFRVGNSEYFITEACEYKQSFLRFFPYVGIILNIDADHLDFYKDINHIKDTFKQFVRLIPNDGYIIGNADDEKVMEVLEVAKCNVLTYGINNGDIQARNIEFNEKGCATFDVFRNEEKLLSLSLNVPGMHNVSNSLSAVCLAEIFNINADSIVSGLSSFGGAHKRFEYKGTKNDITVIDDYAHHPVEIKATLSTAKKMNHNRIVCVFQPHTYTRTKTLFNDFVKCFDDCDELVLMDIYAAREKDLGEINSDQLGDAIRAHGVKCTNVHSHEEALEYVNANLSKGDLLLTVGAGDVVKVGELFLK.

118 to 124 (GTHGKTT) is a binding site for ATP.

This sequence belongs to the MurCDEF family.

The protein localises to the cytoplasm. It catalyses the reaction UDP-N-acetyl-alpha-D-muramate + L-alanine + ATP = UDP-N-acetyl-alpha-D-muramoyl-L-alanine + ADP + phosphate + H(+). Its pathway is cell wall biogenesis; peptidoglycan biosynthesis. Its function is as follows. Cell wall formation. The polypeptide is UDP-N-acetylmuramate--L-alanine ligase (Clostridium perfringens (strain 13 / Type A)).